The following is an 894-amino-acid chain: Coiled-coil domain-containing protein 39 (894 aa).

Coiled coils occupy residues threonine 32–lysine 143, alanine 187–glutamate 411, valine 461–glutamate 609, and lysine 647–glutamine 788. Low complexity predominate over residues glycine 844–serine 857. The tract at residues glycine 844–alanine 894 is disordered.

Belongs to the CCDC39 family. Interacts with CCDC40/FAP172. Phosphorylated in flagella.

It localises to the cell projection. The protein localises to the cilium. Its subcellular location is the flagellum. In terms of biological role, required for assembly of dynein regulatory complex (DRC) and inner dynein arm complexes, which are responsible for ciliary beat regulation, by acting as a molecular ruler that determines the 96 nanometer (nm) repeat length and arrangements of components in cilia and flagella. Together with CCDC40/FAP172 forms a 96-nm-long complex in flagella. This complex does not act as a physical ruler, but rather act as a negative regulator for radial spokes: the complex lays along specific protofilaments, masking radial spoke binding sites and allowing recruitment of inner dynein arm (IDA) and nexin-dynein regulatory complexes (N-DRC). This chain is Coiled-coil domain-containing protein 39 (CCDC39), found in Chlamydomonas reinhardtii (Chlamydomonas smithii).